A 602-amino-acid polypeptide reads, in one-letter code: MLRTHLAGSLRAEQAQQTVTLTGWVARRRDHGGVIFIDLRDASGVSQVVFREGAAAEQAHRLRAEYCVKVTGVVEVRPEGNQNFEIPTGAIEVNVTDLEVLNESAPLPFQLDDQAGEEARLKYRYLDLRREGPGHAIRLRSKVNAAARAVLAHHEFVEVETPTLTRSTPEGARDFLVPARLQPGSFYALPQSPQLFKQLLMVGGIERYYQIARCYRDEDFRADRQPEFTQLDIEMSFVNQDDVILLAEEVLSSLWKLVGHEIKTPIARMTYAEAMRRYGSDKPDLRFGVELVECAEFFKDTTFRVFQQEYVGAVVMPGGASQPRKQLDAWQEWAKQRGAKGLAYVLVGEDGTLGGPVAKNLTDTEREGLAAHVGAKPGDCIFFAAGTTKSSRALLGAARGEIARKQNLIDPDAWAFVWVVDAPLFEPTADATASGDVALGYSAWTAVHHAFTSPKPESIDTFDTDPGSALAYAYDIVCNGNEIGGGSIRIHRKDIQERVFKVMGISHEEAEEKFGFLLDAFAFGAPPHGGIAFGWDRITALLAGVDSIREVIAFPKSGGGVDPLTNAPAPITAQQRKESGVDAKPEPKGDAASAKPDAPADK.

Glutamate 170 contributes to the L-aspartate binding site. Residues 194–197 (QLFK) form an aspartate region. Arginine 216 contacts L-aspartate. Residues 216-218 (RDE) and glutamine 225 contribute to the ATP site. Position 448 (histidine 448) interacts with L-aspartate. An ATP-binding site is contributed by glutamate 482. Arginine 489 is a binding site for L-aspartate. 534–537 (GWDR) lines the ATP pocket. The disordered stretch occupies residues 559-602 (GGVDPLTNAPAPITAQQRKESGVDAKPEPKGDAASAKPDAPADK). Residues 575-589 (QRKESGVDAKPEPKG) show a composition bias toward basic and acidic residues. Over residues 590–602 (DAASAKPDAPADK) the composition is skewed to low complexity.

This sequence belongs to the class-II aminoacyl-tRNA synthetase family. Type 1 subfamily. Homodimer.

It is found in the cytoplasm. It catalyses the reaction tRNA(Asx) + L-aspartate + ATP = L-aspartyl-tRNA(Asx) + AMP + diphosphate. In terms of biological role, aspartyl-tRNA synthetase with relaxed tRNA specificity since it is able to aspartylate not only its cognate tRNA(Asp) but also tRNA(Asn). Reaction proceeds in two steps: L-aspartate is first activated by ATP to form Asp-AMP and then transferred to the acceptor end of tRNA(Asp/Asn). The protein is Aspartate--tRNA(Asp/Asn) ligase of Rhodococcus jostii (strain RHA1).